A 636-amino-acid polypeptide reads, in one-letter code: Chaperone protein HtpG (636 aa).

Positions 1–342 (MSGETLEFQA…AHDLSLNISR (342 aa)) are a; substrate-binding. Residues 343-558 (ELLQQDRQIQ…AHDVTPTLEK (216 aa)) are b. The c stretch occupies residues 559–636 (MYRAMGHEVP…ILAERLARTL (78 aa)).

It belongs to the heat shock protein 90 family. Homodimer.

It localises to the cytoplasm. Functionally, molecular chaperone. Has ATPase activity. The protein is Chaperone protein HtpG of Salinispora arenicola (strain CNS-205).